A 276-amino-acid polypeptide reads, in one-letter code: Putative pyridoxine kinase (276 aa).

Asn-139 is an ATP binding site. Residue Glu-142 coordinates Mg(2+). ATP contacts are provided by residues 176–180 (KGGKA), Asp-188, Gly-213, and Lys-238.

This sequence belongs to the ThiD family.

The enzyme catalyses pyridoxal + ATP = pyridoxal 5'-phosphate + ADP + H(+). In terms of biological role, phosphorylates B6 vitamers; functions in a salvage pathway. Uses pyridoxal, pyridoxine, and pyridoxamine as substrates. In Staphylococcus epidermidis (strain ATCC 12228 / FDA PCI 1200), this protein is Putative pyridoxine kinase (pdxK).